A 350-amino-acid polypeptide reads, in one-letter code: DNA polymerase IV (350 aa).

A UmuC domain is found at 5–181 (IMHYDMDAFY…KKIKIIPGVG (177 aa)). Mg(2+) is bound by residues Asp-9 and Asp-99. The active site involves Glu-100.

This sequence belongs to the DNA polymerase type-Y family. In terms of assembly, monomer. Requires Mg(2+) as cofactor.

It localises to the cytoplasm. The catalysed reaction is DNA(n) + a 2'-deoxyribonucleoside 5'-triphosphate = DNA(n+1) + diphosphate. Functionally, poorly processive, error-prone DNA polymerase involved in untargeted mutagenesis. Copies undamaged DNA at stalled replication forks, which arise in vivo from mismatched or misaligned primer ends. These misaligned primers can be extended by PolIV. Exhibits no 3'-5' exonuclease (proofreading) activity. May be involved in translesional synthesis, in conjunction with the beta clamp from PolIII. The polypeptide is DNA polymerase IV (Fusobacterium nucleatum subsp. nucleatum (strain ATCC 25586 / DSM 15643 / BCRC 10681 / CIP 101130 / JCM 8532 / KCTC 2640 / LMG 13131 / VPI 4355)).